A 114-amino-acid chain; its full sequence is Iron-sulfur cluster insertion protein ErpA (114 aa).

Residues Cys42, Cys106, and Cys108 each contribute to the iron-sulfur cluster site.

The protein belongs to the HesB/IscA family. Homodimer. Requires iron-sulfur cluster as cofactor.

Its function is as follows. Required for insertion of 4Fe-4S clusters for at least IspG. The protein is Iron-sulfur cluster insertion protein ErpA of Salmonella typhi.